The primary structure comprises 175 residues: CDP-archaeol synthase (175 aa).

Helical transmembrane passes span 41–61 (GLFS…WLSM), 78–98 (YASA…GDMF), 122–142 (FVVG…VSNF), and 150–170 (VLIM…FIGV).

The protein belongs to the CDP-archaeol synthase family. It depends on Mg(2+) as a cofactor.

The protein resides in the cell membrane. It catalyses the reaction 2,3-bis-O-(geranylgeranyl)-sn-glycerol 1-phosphate + CTP + H(+) = CDP-2,3-bis-O-(geranylgeranyl)-sn-glycerol + diphosphate. The protein operates within membrane lipid metabolism; glycerophospholipid metabolism. In terms of biological role, catalyzes the formation of CDP-2,3-bis-(O-geranylgeranyl)-sn-glycerol (CDP-archaeol) from 2,3-bis-(O-geranylgeranyl)-sn-glycerol 1-phosphate (DGGGP) and CTP. This reaction is the third ether-bond-formation step in the biosynthesis of archaeal membrane lipids. This Methanosarcina acetivorans (strain ATCC 35395 / DSM 2834 / JCM 12185 / C2A) protein is CDP-archaeol synthase.